The sequence spans 1707 residues: Kinesin-like protein KIF1A (1707 aa).

The region spanning 5–354 (SVKVAVRVRP…LRYADRAKQI (350 aa)) is the Kinesin motor domain. ATP is bound by residues Gly102, Lys103, Ser104, Tyr105, and Ser215. Ser104 lines the Mg(2+) pocket. The stretch at 439 to 466 (SEEAIERLKETEKIIAELNETWEEKLRR) forms a coiled coil. Residues 525–581 (TRVGREDAERRQDIVLSGHFIKEEHCIFRSDSRGGGEAVVTLEPCEGADTYVNGKKV) form the FHA domain. 2 coiled-coil regions span residues 637-671 (EKQG…LLEQ) and 811-831 (LEKL…AAEV). A required for interaction with CALM1, PPFIA2 and TANC2 region spans residues 657–1105 (QYRREREEAT…LCKDVLSPLR (449 aa)). Disordered regions lie at residues 1424 to 1462 (PVPE…EVPN) and 1536 to 1576 (TDVR…EKEP). Residues 1429-1453 (LSPASSEDSESRSSSGASSPLSAEG) show a composition bias toward low complexity. In terms of domain architecture, PH spans 1592-1690 (IVSKKGYLHF…WLYAFNPLLA (99 aa)).

It belongs to the TRAFAC class myosin-kinesin ATPase superfamily. Kinesin family. Unc-104 subfamily. In terms of assembly, dimeric motor; dimerization is required for ATP-driven processive motility. Monomer in vitro. Interacts with PPFIA1 and PPFIA4. Interacts with CALM1; the interaction is increased in presence of calcium and increases neuronal dense core vesicles motility. Interacts with PPFIA2 and TANC2; both interactions allow the recruitment of neuronal dense core vesicles to dendritic spines and decrease in presence of calcium. Interacts with SYT4 (unphosphorylated) and SYT11; both interactions increase in presence of calcium. Interacts with MADD.

It is found in the cytoplasm. Its subcellular location is the cytoskeleton. The protein localises to the cell projection. It localises to the neuron projection. The protein resides in the axon. It is found in the perinuclear region. Its subcellular location is the synapse. The protein localises to the cytoplasmic vesicle. It localises to the secretory vesicle. The protein resides in the neuronal dense core vesicle membrane. It carries out the reaction ATP + H2O + a kinesin associated with a microtubule at position (n) = ADP + phosphate a kinesin associated with a microtubule at position (n+1, toward the plus end).. In terms of biological role, kinesin motor with a plus-end-directed microtubule motor activity, involved in anterograde axonal transport of synaptic vesicle precursors. Also required for neuronal dense core vesicles (DCVs) transport to the dendritic spines and axons. The interaction calcium-dependent with CALM1 increases vesicle motility and interaction with the scaffolding proteins PPFIA2 and TANC2 recruits DCVs to synaptic sites. This Rattus norvegicus (Rat) protein is Kinesin-like protein KIF1A.